We begin with the raw amino-acid sequence, 400 residues long: Probable phospho-2-dehydro-3-deoxyheptonate aldolase (400 aa).

This sequence belongs to the class-II DAHP synthase family.

It carries out the reaction D-erythrose 4-phosphate + phosphoenolpyruvate + H2O = 7-phospho-2-dehydro-3-deoxy-D-arabino-heptonate + phosphate. The protein operates within antibiotic biosynthesis; phenazine biosynthesis. This is Probable phospho-2-dehydro-3-deoxyheptonate aldolase (phzC) from Pseudomonas fluorescens.